The chain runs to 725 residues: Probable dipeptidyl-peptidase 5 (725 aa).

Positions 1–18 (MGALRWLSIAATASTALA) are cleaved as a signal peptide. Residues Asn-75, Asn-96, Asn-153, Asn-258, Asn-383, and Asn-453 are each glycosylated (N-linked (GlcNAc...) asparagine). Ser-563 serves as the catalytic Charge relay system. Residue Asn-610 is glycosylated (N-linked (GlcNAc...) asparagine). Active-site charge relay system residues include Asp-646 and His-678.

Belongs to the peptidase S9C family.

The protein resides in the secreted. In terms of biological role, extracellular dipeptidyl-peptidase which removes N-terminal dipeptides sequentially from polypeptides having unsubstituted N-termini. In Aspergillus flavus (strain ATCC 200026 / FGSC A1120 / IAM 13836 / NRRL 3357 / JCM 12722 / SRRC 167), this protein is Probable dipeptidyl-peptidase 5 (dpp5).